Here is a 219-residue protein sequence, read N- to C-terminus: Large ribosomal subunit protein uL4 (219 aa).

The interval 45 to 103 is disordered; sequence ARRQGTHATKTRGQVRGGGRKPYRQKGTGRARQGSIRAPQFTGGGTVHGPQPRDYDQRT. Residues 62-73 show a composition bias toward basic residues; it reads GGRKPYRQKGTG.

The protein belongs to the universal ribosomal protein uL4 family. As to quaternary structure, part of the 50S ribosomal subunit.

One of the primary rRNA binding proteins, this protein initially binds near the 5'-end of the 23S rRNA. It is important during the early stages of 50S assembly. It makes multiple contacts with different domains of the 23S rRNA in the assembled 50S subunit and ribosome. Functionally, forms part of the polypeptide exit tunnel. This chain is Large ribosomal subunit protein uL4, found in Corynebacterium kroppenstedtii (strain DSM 44385 / JCM 11950 / CIP 105744 / CCUG 35717).